Here is a 636-residue protein sequence, read N- to C-terminus: C-terminal binding protein AN (636 aa).

The segment at 1-21 is disordered; the sequence is MSKIRSSATMPHRDQPSPASP. Residues serine 91, 147–148, 169–174, aspartate 193, 231–237, 258–260, aspartate 284, and 307–311 contribute to the NAD(+) site; these read WL, VGRSVS, CALTNDT, TGS, and RSADY. The disordered stretch occupies residues 341-489; that stretch reads VSDEEVEESE…PLEVMQESSP (149 aa). Positions 342 to 357 are enriched in acidic residues; that stretch reads SDEEVEESEASEEEEQ. Over residues 369 to 384 the composition is skewed to polar residues; that stretch reads ESTSRQQGESTLTSTE. Residues 385–395 are compositionally biased toward basic and acidic residues; sequence IVRREASELKE. Positions 398-409 are enriched in polar residues; it reads SPGQQHVSQNTA. A compositionally biased stretch (basic residues) spans 417 to 429; the sequence is SRSGKKAKKRHSQ. Positions 430–445 are enriched in polar residues; sequence QKYMQKTDGSSGLNEE. Basic and acidic residues predominate over residues 470–480; it reads SPEDSRSRKTP.

It belongs to the D-isomer specific 2-hydroxyacid dehydrogenase family. Plant AN subfamily. Homodimer. Interacts with KCBP and SUB (via intra-cellular domain); AN is not required for the correct subcellular localization and recycling of SUB. Binds to SOKs proteins polymers (e.g. SOK1, SOK2, SOK3 and SOK4). Interacts with IPGA1 on microtubule upon mechanical stress to regulate microtubule organization. It depends on NAD(+) as a cofactor. As to expression, expressed in cotyledons, leaves, roots, stems and floral buds.

It is found in the cytoplasm. Its subcellular location is the golgi apparatus. The protein resides in the trans-Golgi network. It localises to the cytoskeleton. Functionally, involved in controlling the equilibrium between tubular and stacked structures in the Golgi complex. Required for cortical microtubules (MTs) arrangement that confers cell shape. Cooperatively with IPGA1, negatively regulates cortical microtubules (CMTs) organization in response to mechanical stress and modulates pavement cells morphogenesis leading to puzzle shape, probably in an AAA1/KTN1-dependent manner. Regulates the width of leaves by controlling the polar elongation of leaf cells. Involved in the regulation of trichome branching. Seems to not be able to regulate gene transcription. Regulates epidermal cell divisions and elongation in a non-cell-autonomous manner (regulated by subepidermal cells), but regulates epidermal cell polarity, shape, trichome branching and elongation in a cell-autonomous manner. Negatively regulates growth in the petiole elongation. Prevents lipid peroxidation as a result of abiotic stress response. Is involved in the SUB-dependent signaling mechanism and may act in a membrane trafficking event around the trans-Golgi network. The chain is C-terminal binding protein AN from Arabidopsis thaliana (Mouse-ear cress).